Consider the following 184-residue polypeptide: Major urinary protein 3 (184 aa).

Residues 1–22 (MKLLLPLLLLLCLELTLVCIHA) form the signal peptide. Residue asparagine 66 is glycosylated (N-linked (GlcNAc...) asparagine). Cysteines 86 and 179 form a disulfide.

It belongs to the calycin superfamily. Lipocalin family. Glycosylated. In terms of tissue distribution, abundant in the urine of adult male mice but absent from that of females.

It localises to the secreted. Binds pheromones that are released from drying urine of males. These pheromones affect the sexual behavior of females. This Mus musculus (Mouse) protein is Major urinary protein 3 (Mup3).